The following is a 79-amino-acid chain: Exodeoxyribonuclease 7 small subunit (79 aa).

Belongs to the XseB family. As to quaternary structure, heterooligomer composed of large and small subunits.

The protein localises to the cytoplasm. The catalysed reaction is Exonucleolytic cleavage in either 5'- to 3'- or 3'- to 5'-direction to yield nucleoside 5'-phosphates.. Functionally, bidirectionally degrades single-stranded DNA into large acid-insoluble oligonucleotides, which are then degraded further into small acid-soluble oligonucleotides. This is Exodeoxyribonuclease 7 small subunit from Syntrophus aciditrophicus (strain SB).